Reading from the N-terminus, the 78-residue chain is U7-lycotoxin-Ls1a (78 aa).

The signal sequence occupies residues 1–22 (MKLIIFTGLALLLIVSLIDVEA). A propeptide spanning residues 23 to 26 (QNEG) is cleaved from the precursor.

It belongs to the neurotoxin 19 (CSTX) family. 07 (U7-Lctx) subfamily. Contains 4 disulfide bonds. As to expression, expressed by the venom gland.

The protein resides in the secreted. This chain is U7-lycotoxin-Ls1a, found in Lycosa singoriensis (Wolf spider).